The following is a 215-amino-acid chain: Urease accessory protein UreG (215 aa).

24-31 (GPVGSGKT) contacts GTP.

It belongs to the SIMIBI class G3E GTPase family. UreG subfamily. In terms of assembly, homodimer. UreD, UreF and UreG form a complex that acts as a GTP-hydrolysis-dependent molecular chaperone, activating the urease apoprotein by helping to assemble the nickel containing metallocenter of UreC. The UreE protein probably delivers the nickel.

It is found in the cytoplasm. Functionally, facilitates the functional incorporation of the urease nickel metallocenter. This process requires GTP hydrolysis, probably effectuated by UreG. The sequence is that of Urease accessory protein UreG from Burkholderia cenocepacia (strain HI2424).